The following is a 187-amino-acid chain: Elongation factor P (187 aa).

This sequence belongs to the elongation factor P family.

Its subcellular location is the cytoplasm. Its pathway is protein biosynthesis; polypeptide chain elongation. Its function is as follows. Involved in peptide bond synthesis. Stimulates efficient translation and peptide-bond synthesis on native or reconstituted 70S ribosomes in vitro. Probably functions indirectly by altering the affinity of the ribosome for aminoacyl-tRNA, thus increasing their reactivity as acceptors for peptidyl transferase. The protein is Elongation factor P of Parvibaculum lavamentivorans (strain DS-1 / DSM 13023 / NCIMB 13966).